The primary structure comprises 33 residues: Beta-amanitin proprotein (33 aa).

Positions 1–10 (MSDINATRLP) are excised as a propeptide. The cyclopeptide (Ile-Pro) cross-link spans 11–18 (IWGIGCDP). The 2'-cysteinyl-6'-hydroxytryptophan sulfoxide (Trp-Cys) cross-link spans 12-16 (WGIGC). The propeptide occupies 19-33 (CVGDDVAALTTRGEA).

The protein belongs to the MSDIN fungal toxin family. Processed by the macrocyclase-peptidase enzyme POPB to yield a toxic cyclic decapeptide. POPB first removes 10 residues from the N-terminus. Conformational trapping of the remaining peptide forces the enzyme to release this intermediate rather than proceed to macrocyclization. The enzyme rebinds the remaining peptide in a different conformation and catalyzes macrocyclization of the N-terminal 8 residues.

In terms of biological role, toxin belonging to the bicyclic octapeptides amatoxins that acts by binding non-competitively to RNA polymerase II and greatly slowing the elongation of transcripts from target promoters. This is Beta-amanitin proprotein from Amanita rimosa.